The following is a 106-amino-acid chain: ATP-dependent Clp protease adapter protein ClpS (106 aa).

Residues 1–22 form a disordered region; the sequence is MNEYHNSLKSKESVKDERQQKL. The span at 9–20 shows a compositional bias: basic and acidic residues; sequence KSKESVKDERQQ.

It belongs to the ClpS family. As to quaternary structure, binds to the N-terminal domain of the chaperone ClpA.

In terms of biological role, involved in the modulation of the specificity of the ClpAP-mediated ATP-dependent protein degradation. This is ATP-dependent Clp protease adapter protein ClpS from Photorhabdus laumondii subsp. laumondii (strain DSM 15139 / CIP 105565 / TT01) (Photorhabdus luminescens subsp. laumondii).